The primary structure comprises 203 residues: Nucleoside triphosphate pyrophosphatase (203 aa).

D80 (proton acceptor) is an active-site residue.

It belongs to the Maf family. A divalent metal cation serves as cofactor.

Its subcellular location is the cytoplasm. The catalysed reaction is a ribonucleoside 5'-triphosphate + H2O = a ribonucleoside 5'-phosphate + diphosphate + H(+). The enzyme catalyses a 2'-deoxyribonucleoside 5'-triphosphate + H2O = a 2'-deoxyribonucleoside 5'-phosphate + diphosphate + H(+). Functionally, nucleoside triphosphate pyrophosphatase. May have a dual role in cell division arrest and in preventing the incorporation of modified nucleotides into cellular nucleic acids. The chain is Nucleoside triphosphate pyrophosphatase from Gluconobacter oxydans (strain 621H) (Gluconobacter suboxydans).